Reading from the N-terminus, the 600-residue chain is MNEELTQRCEEIRKNLIEVVSKNGGHLGSNLGVVELTVCLDEIFDFKEDIVLFDVGHQAYIYKILTDRAERFDSIRTRKGLSPFLDPNESSYDHFISGHAGTALPAAVGFAIANPDKKVIVVVGDASISNGHSLEALNYIGYKKLENILIIVNDNEMSIGENVGFISKFLKKVISSGKYQNFREDVKSFINRIKADRVKRTLERLERSIKGYVTPFYALESLGFRFFNVFEGNNIEKLLPMLKKIKDLKGPTILLVKTEKGKGYCFAEEDKEKFHGIAPFNIETGNTYKSLVSYSEVFGNKILELGKEDENIYTLSAAMIKGTGLHKFSEEFPERCIDTGIAEGFTVTLAAGLAKSGKKPYVCIYSTFIQRAISQLIHDVSIQNLPVRFIIDRSGIVGEDGKTHNGIYDLSFFLSIQNFTVLCPTTAKELGQALEISKNFNLGPLVIRIPRDSIFDIENEEPLEIGRWKVIKKGSKNLFIATGTMLKIILEIYDKLQNRGIYCTIISAASVKPLDENYLLNYIKEYDNIFVLEENYVKNSFGTAILEFFNDNGIQKPLHRIALKSAIIPHGKREELLKEERLKGESLIERIEELIYGRKK.

Thiamine diphosphate-binding positions include H57 and 98–100 (GHA). D125 contributes to the Mg(2+) binding site. Thiamine diphosphate-binding positions include 126–127 (AS), N155, Y264, and E343. Position 155 (N155) interacts with Mg(2+).

The protein belongs to the transketolase family. DXPS subfamily. As to quaternary structure, homodimer. It depends on Mg(2+) as a cofactor. Thiamine diphosphate is required as a cofactor.

It carries out the reaction D-glyceraldehyde 3-phosphate + pyruvate + H(+) = 1-deoxy-D-xylulose 5-phosphate + CO2. It functions in the pathway metabolic intermediate biosynthesis; 1-deoxy-D-xylulose 5-phosphate biosynthesis; 1-deoxy-D-xylulose 5-phosphate from D-glyceraldehyde 3-phosphate and pyruvate: step 1/1. Its function is as follows. Catalyzes the acyloin condensation reaction between C atoms 2 and 3 of pyruvate and glyceraldehyde 3-phosphate to yield 1-deoxy-D-xylulose-5-phosphate (DXP). The sequence is that of 1-deoxy-D-xylulose-5-phosphate synthase from Fusobacterium nucleatum subsp. nucleatum (strain ATCC 25586 / DSM 15643 / BCRC 10681 / CIP 101130 / JCM 8532 / KCTC 2640 / LMG 13131 / VPI 4355).